The primary structure comprises 280 residues: NAD kinase (280 aa).

The Proton acceptor role is filled by D60. NAD(+)-binding positions include 60 to 61 (DG), 134 to 135 (ND), R145, D164, 175 to 180 (TAYSLS), and Q234.

This sequence belongs to the NAD kinase family. Requires a divalent metal cation as cofactor.

Its subcellular location is the cytoplasm. It catalyses the reaction NAD(+) + ATP = ADP + NADP(+) + H(+). In terms of biological role, involved in the regulation of the intracellular balance of NAD and NADP, and is a key enzyme in the biosynthesis of NADP. Catalyzes specifically the phosphorylation on 2'-hydroxyl of the adenosine moiety of NAD to yield NADP. The chain is NAD kinase from Carboxydothermus hydrogenoformans (strain ATCC BAA-161 / DSM 6008 / Z-2901).